Here is a 340-residue protein sequence, read N- to C-terminus: MNICVNSLYRLSTPQFHSLYSEDVSDEVLALLIGEVENGNQNCIDLLCNLALRNDDLGHKVEKLLFDLFSGKRSGSPDIDKKINQACLVLHQIANNDITKNNTEWKKLHAPSRLLYMAGSATTDLSKKIGIAHKIMGDQFAQTDQEQVGVENLWCSARMLSSDELAAATQGLVQESPFLSVNYPIGLIHPTTKENILSTQLLEKMAQSGLSENEVFLINTGDHWLICLFYKLAEKIKCLIFNTYYDLNENTKQEIIEAAKIAGISESDEVNFIEMNLQNNVPNGCSLFCYHTIQLLSNAGQNDPVTTLREFAEKFLTLSVEEQALFNTQTRRQIYEYSLQ.

Histidine 223 is an active-site residue. Cysteine 285 acts as the Nucleophile in catalysis.

Belongs to the peptidase C79 family.

The protein resides in the secreted. Its subcellular location is the host cytoplasm. Its function is as follows. Effector proteins function to alter host cell physiology and promote bacterial survival in host tissues. This protease targets the host cell ubiquitin pathway by acting as a deubiquitinase in infected host cells. The sequence is that of Deubiquitinase SseL (sseL) from Salmonella choleraesuis (strain SC-B67).